A 394-amino-acid chain; its full sequence is MLAQLPPALQSLHLPLRLKLWDGNQFDLGPSPQVTILVKEPQLIGQLTHPSMEQLGTAFVEGKLELEGDIGEAIRVCDELSEALFTDEDEQPPERRSHDKRTDAEAISYHYDVSNAFYQLWLDQDMAYSCAYFREPDNTLDQAQQDKFDHLCRKLRLNAGDYLLDVGCGWGGLARFAAREYDAKVFGITLSKEQLKLGRQRVKAEGLTDKVDLQILDYRDLPQDGRFDKVVSVGMFEHVGHANLALYCQKLFGAVREGGLVMNHGITAKHVDGRPVGRGAGEFIDRYVFPHGELPHLSMISASICEAGLEVVDVESLRLHYAKTLHHWSENLENQLHKAAALVPEKTLRIWRLYLAGCAYAFEKGWINLHQILAVKPYADGHHDLPWTREDMYR.

S-adenosyl-L-methionine contacts are provided by residues 128 to 129 (YS), 163 to 171 (LLDVGCGWG), and 189 to 194 (TLSKEQ). Cys-358 is an active-site residue.

It belongs to the CFA/CMAS family.

The chain is Probable fatty acid methyltransferase from Pseudomonas putida (Arthrobacter siderocapsulatus).